The primary structure comprises 273 residues: Large ribosomal subunit protein uL2 (273 aa).

The tract at residues Arg221–Arg262 is disordered. Over residues Lys253–Arg262 the composition is skewed to basic residues.

This sequence belongs to the universal ribosomal protein uL2 family. In terms of assembly, part of the 50S ribosomal subunit. Forms a bridge to the 30S subunit in the 70S ribosome.

Functionally, one of the primary rRNA binding proteins. Required for association of the 30S and 50S subunits to form the 70S ribosome, for tRNA binding and peptide bond formation. It has been suggested to have peptidyltransferase activity; this is somewhat controversial. Makes several contacts with the 16S rRNA in the 70S ribosome. This Haemophilus ducreyi (strain 35000HP / ATCC 700724) protein is Large ribosomal subunit protein uL2.